The chain runs to 603 residues: Myotubularin (603 aa).

Polar residues predominate over residues 1–13 (MASAPTSKYNSHS). The segment at 1 to 32 (MASAPTSKYNSHSLENESIKRTSRDGVNRDVG) is disordered. Phosphoserine occurs at positions 13 and 18. Over residues 14–32 (LENESIKRTSRDGVNRDVG) the composition is skewed to basic and acidic residues. The 69-residue stretch at 29–97 (RDVGETLPRL…GVISRIEKMG (69 aa)) folds into the GRAM domain. One can recognise a Myotubularin phosphatase domain in the interval 163–538 (GWTVYNPVEE…RHLELWVNYY (376 aa)). Residues asparagine 288, asparagine 313, and isoleucine 314 each contribute to the a 1,2-diacyl-sn-glycero-3-phospho-(1D-myo-inositol-3,5-bisphosphate) site. Residues asparagine 288, asparagine 313, and isoleucine 314 each coordinate a 1,2-diacyl-sn-glycero-3-phospho-(1D-myo-inositol-3-phosphate). Cysteine 375 functions as the Phosphocysteine intermediate in the catalytic mechanism. Residues serine 376, aspartate 377, glycine 378, tryptophan 379, aspartate 380, arginine 381, lysine 417, and arginine 421 each coordinate a 1,2-diacyl-sn-glycero-3-phospho-(1D-myo-inositol-3,5-bisphosphate). Positions 376, 377, 378, 379, 380, and 381 each coordinate a 1,2-diacyl-sn-glycero-3-phospho-(1D-myo-inositol-3-phosphate). A 1,2-diacyl-sn-glycero-3-phospho-(1D-myo-inositol-3-phosphate) is bound at residue arginine 421. A Phosphothreonine modification is found at threonine 495. Residues 580–603 (AKLSDPSASPSSPSQMMPHVQTHF) form a disordered region. A compositionally biased stretch (low complexity) spans 583–593 (SDPSASPSSPS). Position 588 is a phosphoserine (serine 588).

This sequence belongs to the protein-tyrosine phosphatase family. Non-receptor class myotubularin subfamily. Heterodimer with MTMR12. Interacts with KMT2A/MLL1 (via SET domain). Interacts with DES in skeletal muscle but not in cardiac muscle. Interacts with SPEG.

The protein localises to the cytoplasm. The protein resides in the cell membrane. It localises to the cell projection. Its subcellular location is the filopodium. It is found in the ruffle. The protein localises to the late endosome. The protein resides in the myofibril. It localises to the sarcomere. It catalyses the reaction a 1,2-diacyl-sn-glycero-3-phospho-(1D-myo-inositol-3-phosphate) + H2O = a 1,2-diacyl-sn-glycero-3-phospho-(1D-myo-inositol) + phosphate. It carries out the reaction a 1,2-diacyl-sn-glycero-3-phospho-(1D-myo-inositol-3,5-bisphosphate) + H2O = a 1,2-diacyl-sn-glycero-3-phospho-(1D-myo-inositol-5-phosphate) + phosphate. The enzyme catalyses 1,2-dioctanoyl-sn-glycero-3-phospho-(1-D-myo-inositol-3-phosphate) + H2O = 1,2-dioctanoyl-sn-glycero-3-phospho-(1D-myo-inositol) + phosphate. The catalysed reaction is 1,2-dioctanoyl-sn-glycero-3-phospho-(1D-myo-inositol-3,5-bisphosphate) + H2O = 1,2-dioctanoyl-sn-glycero-3-phospho-(1D-myo-inositol-5-phosphate) + phosphate. It catalyses the reaction 1,2-dihexadecanoyl-sn-glycero-3-phospho-(1D-myo-inositol-3,5-phosphate) + H2O = 1,2-dihexadecanoyl-sn-glycero-3-phospho-(1D-myo-inositol-5-phosphate) + phosphate. With respect to regulation, allosterically activated by phosphatidylinositol 5-phosphate (PI5P). Lipid phosphatase which dephosphorylates phosphatidylinositol 3-monophosphate (PI3P) and phosphatidylinositol 3,5-bisphosphate (PI(3,5)P2). Has also been shown to dephosphorylate phosphotyrosine- and phosphoserine-containing peptides. Negatively regulates EGFR degradation through regulation of EGFR trafficking from the late endosome to the lysosome. Plays a role in vacuolar formation and morphology. Regulates desmin intermediate filament assembly and architecture. Plays a role in mitochondrial morphology and positioning. Required for skeletal muscle maintenance but not for myogenesis. In skeletal muscles, stabilizes MTMR12 protein levels. This Bos taurus (Bovine) protein is Myotubularin.